The following is a 473-amino-acid chain: Photosystem II CP43 reaction center protein (473 aa).

Positions 1–14 (MKTLYSLRRFYHVE) are excised as a propeptide. The residue at position 15 (Thr-15) is an N-acetylthreonine. A Phosphothreonine modification is found at Thr-15. The next 5 membrane-spanning stretches (helical) occupy residues 69-93 (LFEV…PHLA), 134-155 (LLGP…KDRN), 178-200 (KALY…RKIT), 255-275 (KPFA…LSYS), and 291-312 (WFNN…ASQA). [CaMn4O5] cluster is bound at residue Glu-367. The chain crosses the membrane as a helical span at residues 447–471 (RARAAAAGFEKGIDRDFEPVLSMTP).

The protein belongs to the PsbB/PsbC family. PsbC subfamily. PSII is composed of 1 copy each of membrane proteins PsbA, PsbB, PsbC, PsbD, PsbE, PsbF, PsbH, PsbI, PsbJ, PsbK, PsbL, PsbM, PsbT, PsbX, PsbY, PsbZ, Psb30/Ycf12, at least 3 peripheral proteins of the oxygen-evolving complex and a large number of cofactors. It forms dimeric complexes. Binds multiple chlorophylls and provides some of the ligands for the Ca-4Mn-5O cluster of the oxygen-evolving complex. It may also provide a ligand for a Cl- that is required for oxygen evolution. PSII binds additional chlorophylls, carotenoids and specific lipids. serves as cofactor.

The protein resides in the plastid. It is found in the chloroplast thylakoid membrane. In terms of biological role, one of the components of the core complex of photosystem II (PSII). It binds chlorophyll and helps catalyze the primary light-induced photochemical processes of PSII. PSII is a light-driven water:plastoquinone oxidoreductase, using light energy to abstract electrons from H(2)O, generating O(2) and a proton gradient subsequently used for ATP formation. The chain is Photosystem II CP43 reaction center protein from Arabis hirsuta (Hairy rock-cress).